The following is a 682-amino-acid chain: Zinc finger protein 16 (682 aa).

2 stretches are compositionally biased toward basic and acidic residues: residues 1–10 (MPSLRTRREE) and 113–125 (VSERDWGVPEGRR). 2 disordered regions span residues 1-33 (MPSLRTRREEAEMELSAPGPSPWTPAAQAHVSD) and 112-134 (DVSERDWGVPEGRRLPQSLSQEG). The necessary for transcription activation stretch occupies residues 62 to 210 (YQQPDCDTRT…GVPTAESPLI (149 aa)). The C2H2-type 1; degenerate zinc finger occupies 209–231 (LICNECGKTFQGNPDLIQCQIVH). The C2H2-type 2; degenerate zinc finger occupies 237–259 (FMCDDCGKTFSQNSVLKNHHRSH). Residue Lys253 forms a Glycyl lysine isopeptide (Lys-Gly) (interchain with G-Cter in SUMO2) linkage. 8 consecutive C2H2-type zinc fingers follow at residues 265–287 (YQCSECGKAFRGHSDFSRHQSHH), 293–315 (YMCNECGKAFSQNSSLKKHQKSH), 321–343 (YECNECGKAFRRSSNLIQHQRIH), 349–371 (YVCSECGKAFRRSSNLIKHHRTH), 377–399 (FECGECGKAFSQSAHLRKHQRVH), 405–427 (YECNDCGKPFSRVSNLIKHHRVH), 433–455 (YKCSDCGKAFSQSSSLIQHRRIH), and 461–483 (HVCNICGKAFSYSSVLRKHQIIH). 2 required for nuclear localization regions span residues 268–393 (SECG…AHLR) and 341–373 (RIHSGEKPYVCSECGKAFRRSSNLIKHHRTHTG). The interval 473–503 (SSVLRKHQIIHTGEKPYRCSVCGKAFSHSSA) is required for nuclear localization. Lys487 carries the post-translational modification N6-acetyllysine. 7 C2H2-type zinc fingers span residues 489 to 511 (YRCSVCGKAFSHSSALIQHQGVH), 517 to 539 (YACHECGKTFGRSSNLILHQRVH), 545 to 567 (YECTECGKTFSQSSTLIQHQRIH), 573 to 595 (HECNQCGKAFNRSSNLIHHQKVH), 601 to 623 (YTCVECGKGFSQSSHLIQHQIIH), 629 to 651 (YKCSECGKAFSQRSVLIQHQRIH), and 657 to 679 (YDCAACGKAFSQRSKLIKHQLIH).

Belongs to the krueppel C2H2-type zinc-finger protein family. As to quaternary structure, interacts with INCA1; the interaction inhibits INCA1 activity and induces the cell cycle process.

The protein resides in the nucleus. Its function is as follows. Acts as a transcriptional activator. Promotes cell proliferation by facilitating the cell cycle phase transition from the S to G2/M phase. Involved in both the hemin- and phorbol myristate acetate (PMA)-induced erythroid and megakaryocytic differentiation, respectively. Also plays a role as an inhibitor of cell apoptosis. In Gorilla gorilla gorilla (Western lowland gorilla), this protein is Zinc finger protein 16 (ZNF16).